Here is a 183-residue protein sequence, read N- to C-terminus: Neuroblastoma suppressor of tumorigenicity 1 (183 aa).

The first 19 residues, 1 to 19 (MVMCVRAVLVCVLLELSRA), serve as a signal peptide directing secretion. Intrachain disulfides connect C38–C88, C52–C102, C62–C121, C66–C123, and C85–C126. In terms of domain architecture, CTCK spans 38 to 127 (CEAKNITQIV…ILHCSCQSCS (90 aa)). Positions 145–170 (AQDLPSLPDATHTHPQHAHMQADQRD) are disordered.

Belongs to the DAN family.

It localises to the secreted. In terms of biological role, may act as a tumor suppressor. The chain is Neuroblastoma suppressor of tumorigenicity 1 (nbl1) from Danio rerio (Zebrafish).